We begin with the raw amino-acid sequence, 129 residues long: Beta-galactoside-binding lectin (129 aa).

Serine 1 carries the post-translational modification N-acetylserine. In terms of domain architecture, Galectin spans 4-129 (GVVDERMSFK…EARIYSIEIK (126 aa)). 69-75 (WGTEQRE) provides a ligand contact to a beta-D-galactoside.

In terms of biological role, this protein binds beta-galactoside. Its physiological function is not yet known. The chain is Beta-galactoside-binding lectin from Electrophorus electricus (Electric eel).